The following is a 235-amino-acid chain: Ribitol-5-phosphate cytidylyltransferase (235 aa).

CTP is bound by residues 7–10 (LAGG), 82–88 (GADRNTS), and serine 113.

The protein belongs to the IspD/TarI cytidylyltransferase family. TarI subfamily.

It carries out the reaction D-ribitol 5-phosphate + CTP + H(+) = CDP-L-ribitol + diphosphate. Its pathway is cell wall biogenesis; poly(ribitol phosphate) teichoic acid biosynthesis. In terms of biological role, catalyzes the transfer of the cytidylyl group of CTP to D-ribitol 5-phosphate. This chain is Ribitol-5-phosphate cytidylyltransferase, found in Streptococcus pneumoniae serotype 2 (strain D39 / NCTC 7466).